We begin with the raw amino-acid sequence, 723 residues long: Tryptophan 2-monooxygenase (723 aa).

S218, E238, R246, and R266 together coordinate FMN. R266 contributes to the substrate binding site.

This sequence belongs to the tryptophan 2-monooxygenase family. It depends on FMN as a cofactor.

It catalyses the reaction L-tryptophan + O2 = indole-3-acetamide + CO2 + H2O. Its pathway is plant hormone metabolism; auxin biosynthesis. The chain is Tryptophan 2-monooxygenase (iaaM) from Allorhizobium ampelinum (strain ATCC BAA-846 / DSM 112012 / S4) (Agrobacterium vitis (strain S4)).